A 357-amino-acid polypeptide reads, in one-letter code: mRNA endoribonuclease toxin LS (357 aa).

Forms homodimer in solution. Forms a complex with cognate antitoxin RnlB and with enterobacteria phage T4 antitoxin Dmd.

It is found in the cytoplasm. Toxic component of a type II toxin-antitoxin (TA) system. A stable (half-life 27.6 minutes) endoribonuclease that in the absence of cognate antitoxin RnlB causes generalized RNA degradation. Degrades late enterobacteria phage T4 mRNAs, protecting the host against T4 reproduction. Activity is inhibited by cognate antitoxin RnlB and by enterobacteria phage T4 protein Dmd. Targets cyaA mRNA. This Escherichia coli (strain K12) protein is mRNA endoribonuclease toxin LS (rnlA).